The following is a 338-amino-acid chain: Tetraacyldisaccharide 4'-kinase (338 aa).

53-60 (VAGGAGKT) contributes to the ATP binding site.

Belongs to the LpxK family.

The enzyme catalyses a lipid A disaccharide + ATP = a lipid IVA + ADP + H(+). Its pathway is glycolipid biosynthesis; lipid IV(A) biosynthesis; lipid IV(A) from (3R)-3-hydroxytetradecanoyl-[acyl-carrier-protein] and UDP-N-acetyl-alpha-D-glucosamine: step 6/6. Functionally, transfers the gamma-phosphate of ATP to the 4'-position of a tetraacyldisaccharide 1-phosphate intermediate (termed DS-1-P) to form tetraacyldisaccharide 1,4'-bis-phosphate (lipid IVA). In Polaromonas sp. (strain JS666 / ATCC BAA-500), this protein is Tetraacyldisaccharide 4'-kinase.